A 126-amino-acid polypeptide reads, in one-letter code: Aspartate 1-decarboxylase 2 (126 aa).

Ser25 acts as the Schiff-base intermediate with substrate; via pyruvic acid in catalysis. Ser25 is subject to Pyruvic acid (Ser). Thr57 serves as a coordination point for substrate. Tyr58 serves as the catalytic Proton donor. 73–75 contributes to the substrate binding site; that stretch reads GSA.

It belongs to the PanD family. In terms of assembly, heterooctamer of four alpha and four beta subunits. It depends on pyruvate as a cofactor. Post-translationally, is synthesized initially as an inactive proenzyme, which is activated by self-cleavage at a specific serine bond to produce a beta-subunit with a hydroxyl group at its C-terminus and an alpha-subunit with a pyruvoyl group at its N-terminus.

It is found in the cytoplasm. It carries out the reaction L-aspartate + H(+) = beta-alanine + CO2. The protein operates within cofactor biosynthesis; (R)-pantothenate biosynthesis; beta-alanine from L-aspartate: step 1/1. In terms of biological role, catalyzes the pyruvoyl-dependent decarboxylation of aspartate to produce beta-alanine. The polypeptide is Aspartate 1-decarboxylase 2 (Polaromonas sp. (strain JS666 / ATCC BAA-500)).